Consider the following 630-residue polypeptide: Prolactin receptor (630 aa).

The N-terminal stretch at 1–23 (MMTKVGEVLLLLLLPAFVPHTDG) is a signal peptide. The Extracellular portion of the chain corresponds to 24-234 (THYSLPGKPT…VKVPEYLHRE (211 aa)). Fibronectin type-III domains are found at residues 31–128 (KPTE…IVQP) and 130–230 (PPEK…VPEY). Cystine bridges form between Cys-37–Cys-47 and Cys-76–Cys-87. N-linked (GlcNAc...) asparagine glycosylation is found at Asn-92 and Asn-101. Residues Asp-212 and His-213 each coordinate Zn(2+). Residues 216–220 (WSEWS) carry the WSXWS motif motif. The chain crosses the membrane as a helical span at residues 235–258 (KSVWILVLVFSAFILLLLTWLIHM). The Cytoplasmic portion of the chain corresponds to 259 to 630 (NSHSLKHCML…DTATVFSVHT (372 aa)). The Box 1 motif signature appears at 267 to 275 (MLPPVPGPK). The disordered stretch occupies residues 339-389 (KSIGSASDSDSGRGSCDSDNLLMDKSGAPKEEQQQQNQEGDQIGKETQGPK). Positions 340–357 (SIGSASDSDSGRGSCDSD) are enriched in low complexity. A compositionally biased stretch (basic and acidic residues) spans 380-389 (QIGKETQGPK).

The protein belongs to the type I cytokine receptor family. Type 1 subfamily.

Its subcellular location is the membrane. This is a receptor for the anterior pituitary hormone prolactin. The chain is Prolactin receptor (prlr) from Oreochromis niloticus (Nile tilapia).